The following is a 670-amino-acid chain: DNA ligase (670 aa).

NAD(+) is bound by residues 32-36 (DSEYD), 81-82 (SL), and glutamate 114. Residue lysine 116 is the N6-AMP-lysine intermediate of the active site. Residues arginine 137, glutamate 174, lysine 291, and lysine 315 each contribute to the NAD(+) site. 4 residues coordinate Zn(2+): cysteine 409, cysteine 412, cysteine 427, and cysteine 433. Residues 592–670 (ASENLFKDKT…EEEFLAQITR (79 aa)) form the BRCT domain.

The protein belongs to the NAD-dependent DNA ligase family. LigA subfamily. Mg(2+) is required as a cofactor. Requires Mn(2+) as cofactor.

It carries out the reaction NAD(+) + (deoxyribonucleotide)n-3'-hydroxyl + 5'-phospho-(deoxyribonucleotide)m = (deoxyribonucleotide)n+m + AMP + beta-nicotinamide D-nucleotide.. Its function is as follows. DNA ligase that catalyzes the formation of phosphodiester linkages between 5'-phosphoryl and 3'-hydroxyl groups in double-stranded DNA using NAD as a coenzyme and as the energy source for the reaction. It is essential for DNA replication and repair of damaged DNA. The sequence is that of DNA ligase from Haemophilus influenzae (strain PittEE).